The following is a 98-amino-acid chain: Large ribosomal subunit protein uL23 (98 aa).

The protein belongs to the universal ribosomal protein uL23 family. Part of the 50S ribosomal subunit. Contacts protein L29, and trigger factor when it is bound to the ribosome.

In terms of biological role, one of the early assembly proteins it binds 23S rRNA. One of the proteins that surrounds the polypeptide exit tunnel on the outside of the ribosome. Forms the main docking site for trigger factor binding to the ribosome. The chain is Large ribosomal subunit protein uL23 from Bordetella petrii (strain ATCC BAA-461 / DSM 12804 / CCUG 43448).